The chain runs to 49 residues: Large ribosomal subunit protein bL33 (49 aa).

It belongs to the bacterial ribosomal protein bL33 family.

The polypeptide is Large ribosomal subunit protein bL33 (Fervidobacterium nodosum (strain ATCC 35602 / DSM 5306 / Rt17-B1)).